Reading from the N-terminus, the 193-residue chain is Ribonuclease HII (193 aa).

Positions 15-193 (YIVAGIDEAG…PYHRRSFKCC (179 aa)) constitute an RNase H type-2 domain. A divalent metal cation is bound by residues Asp21, Glu22, and Asp112.

It belongs to the RNase HII family. It depends on Mn(2+) as a cofactor. Mg(2+) is required as a cofactor.

The protein localises to the cytoplasm. The enzyme catalyses Endonucleolytic cleavage to 5'-phosphomonoester.. Its function is as follows. Endonuclease that specifically degrades the RNA of RNA-DNA hybrids. This chain is Ribonuclease HII, found in Rickettsia felis (strain ATCC VR-1525 / URRWXCal2) (Rickettsia azadi).